Reading from the N-terminus, the 245-residue chain is rRNA adenine N-6-methyltransferase (245 aa).

6 residues coordinate S-adenosyl-L-methionine: asparagine 10, leucine 12, glycine 37, glutamate 58, aspartate 83, and asparagine 100.

It belongs to the class I-like SAM-binding methyltransferase superfamily. rRNA adenine N(6)-methyltransferase family.

It catalyses the reaction adenosine(2085) in 23S rRNA + 2 S-adenosyl-L-methionine = N(6)-dimethyladenosine(2085) in 23S rRNA + 2 S-adenosyl-L-homocysteine + 2 H(+). Functionally, this protein produces a dimethylation of the adenine residue at position 2085 in 23S rRNA, resulting in reduced affinity between ribosomes and macrolide-lincosamide-streptogramin B antibiotics. The chain is rRNA adenine N-6-methyltransferase (ermBC) from Escherichia coli.